Here is a 113-residue protein sequence, read N- to C-terminus: Carrot ABA-induced in somatic embryos 3 (113 aa).

3 stretches are compositionally biased toward basic and acidic residues: residues 1-17 (MASG…RAKQ), 32-52 (EAQE…KEQL), and 65-77 (GETR…KEGY). The segment at 1–113 (MASGQEKRSE…IDQSKFRTKS (113 aa)) is disordered.

It belongs to the small hydrophilic plant seed protein family. As to expression, expressed in embryogenic cells, somatic embryos and seeds at the later stages of development. Not detected in leaves.

In Daucus carota (Wild carrot), this protein is Carrot ABA-induced in somatic embryos 3.